The chain runs to 64 residues: MFPLKKSLLLLFFLATINLSLCEQERNAEEERRDEPDERNAEVEKRFLPIVGKLLSGLSGLSGK.

An N-terminal signal peptide occupies residues 1–22 (MFPLKKSLLLLFFLATINLSLC). A propeptide spanning residues 23–46 (EQERNAEEERRDEPDERNAEVEKR) is cleaved from the precursor. Serine amide is present on S62.

The protein belongs to the frog skin active peptide (FSAP) family. Temporin subfamily. In terms of tissue distribution, expressed by the skin glands.

It localises to the secreted. Functionally, antimicrobial peptide with activity against Gram-positive and Gram-negative bacteria and against fungi. Has been tested against S.aureus (MIC=2.5 ug/mL), B.pumilus (MIC=7.5 ug/mL), B.cereus (MIC=75.0 ug/mL), E.coli (MIC=5.0 ug/mL), B.dysenteriae (MIC=20.0 ug/mL), A.cacoaceticus (MIC=60.0 ug/mL), P.aeruginosa (MIC=2.5 ug/mL) and C.albicans (MIC=2.5 ug/mL). Also shows a weak hemolytic activity. This chain is Temporin-ALh, found in Amolops loloensis (Lolokou Sucker Frog).